Reading from the N-terminus, the 285-residue chain is Ribosomal RNA small subunit methyltransferase H (285 aa).

Residues 34-36, aspartate 51, phenylalanine 75, aspartate 96, and histidine 103 contribute to the S-adenosyl-L-methionine site; that span reads AGH. A disordered region spans residues 258 to 285; the sequence is PLVPSEKEAAQNPRARSAKLRAAEKEAP.

It belongs to the methyltransferase superfamily. RsmH family.

The protein localises to the cytoplasm. It catalyses the reaction cytidine(1402) in 16S rRNA + S-adenosyl-L-methionine = N(4)-methylcytidine(1402) in 16S rRNA + S-adenosyl-L-homocysteine + H(+). Functionally, specifically methylates the N4 position of cytidine in position 1402 (C1402) of 16S rRNA. The sequence is that of Ribosomal RNA small subunit methyltransferase H from Thermus thermophilus (strain ATCC BAA-163 / DSM 7039 / HB27).